The following is a 305-amino-acid chain: Ribonuclease BN (305 aa).

His-64, His-66, Asp-68, His-69, His-141, Asp-212, and His-270 together coordinate Zn(2+). The active-site Proton acceptor is Asp-68.

It belongs to the RNase Z family. RNase BN subfamily. Homodimer. The cofactor is Zn(2+).

Functionally, zinc phosphodiesterase, which has both exoribonuclease and endoribonuclease activities. The protein is Ribonuclease BN of Escherichia coli O45:K1 (strain S88 / ExPEC).